Consider the following 140-residue polypeptide: MLKTISPLISPTLLKVLAEMGHGDEIIFSDAHFPAQSLGPQVIRADGLSVSDLLRAIIPLFELDNYAPPLVMMAAVEGDTLDPAVEARYRDALSLEAPCPDIVRIDRYAFYERAQKAFAIVITGECAKYGNILLKKGVTP.

Residue His22 is the Proton donor of the active site. Substrate-binding positions include Asp30, Arg107, and 129-131 (YGN).

Belongs to the RbsD / FucU family. FucU mutarotase subfamily. Homodecamer.

It localises to the cytoplasm. The enzyme catalyses alpha-L-fucose = beta-L-fucose. The protein operates within carbohydrate metabolism; L-fucose metabolism. Involved in the anomeric conversion of L-fucose. This Salmonella arizonae (strain ATCC BAA-731 / CDC346-86 / RSK2980) protein is L-fucose mutarotase.